Reading from the N-terminus, the 743-residue chain is MSLPSASNHAHAASPVYSNSNNNKSSASSKKTSSKNDLLRCAVGLLLKQKNYVSNERFRRSDFLLLQNKQQFAVNKMLDTDLHGGNSFTFSNVQVITNNQHTVDQQFGRFSQFVEAQAEPLRLEMKRFYGPMLCHFYLDLLKAREPRGAVELLRKYAHLVAPVDMYDAPPPTKINGCSTTANESTFNIRFAKEAQDTGDTELDYFMRLVQTLSGYTRLEAAESDDTVAHFRSSKYELHTTAVVVNRICAYLQRRGHVLIMNLLYTWLHVHIVENEQRAFSEDHLLGLTDDLEGEDGEDDVVSKPAVTLNTRGDIRPSKSLTEKSNRKRPAEEPNIMLETDIKQEVETDESAELSKLQLNIDACLDTLKSATEQILKSQVELPRFLRISERSRGLTSAHLDPSECHMLAGFDNSAVQLWQLNQSYCRGKSFYRRYPQKRCPWELNNCANQEEETDEDSSDEDVKCSEEERRERNRARHCKYADNSYNEYGGFQLRGHTKGVTDVRFSAHYPLMYSVSKDATMRCWRAHNLHCAAIYRSHNYPIWCLDESPVGQYVVTGSKDLSARLWSLEKEHALIIYAGHTQDVECVAFHPNGNYIATGSADHSVRLWCATSGKLMRVFADCRQAVTQLAFSPDGKMLAAAGEETKVRIFDLAAGAQLAELKDHSASISSLSWSTHNRHLATACSDGTLRLWDIKKLSPMSDNSSAGSSSSATTNRVLTVNSSCQRLVDVFYGTSKTLYCIGT.

WD repeat units lie at residues 389-428 (ERSRGLTSAHLDPSECHMLAGFDNSAVQLWQLNQSYCRGK), 493-524 (LRGHTKGVTDVRFSAHYPLMYSVSKDATMRCW), 535-576 (YRSH…ALII), 577-618 (YAGH…LMRV), 619-660 (FADC…QLAE), and 661-702 (LKDH…PMSD).

The protein belongs to the WD repeat TAF5 family. In terms of assembly, component of the Spt-Ada-Gcn5 acetyltransferase (SAGA) complex consisting of wda/Taf5L, Saf6, Taf9, Taf10b, Taf12, Ada1, Spt3, Spt7, Spt20, Sf3b3, Sf3b5, Nipped-A/Tra1, a histone acetyltransferase (HAT) module made up of Gcn5, Ada2b (Isoform B), Ada3 and Sgf29, and a deubiquitinase (DUB) module made up of not/nonstop, Sgf11 and e(y)2 tethered to SAGA by Atxn7. Not essential for the assembly or integrity of the SAGA complex. Not a component of the Ada2a-containing ATAC complex.

It is found in the nucleus. Its subcellular location is the chromosome. Its function is as follows. Component of the transcription regulatory complex SAGA, a multiprotein complex that activates transcription by remodeling chromatin and mediating histone acetylation and deubiquitination. The SAGA complex predominantly acetylates histone H3. Involved in acetylation of histone H3 on 'Lys-10' (H3K9ac) by the SAGA complex in the larval central nervous system. Involved in SAGA complex coactivator functions. Required for oogenesis. The polypeptide is Protein will decrease acetylation (Drosophila melanogaster (Fruit fly)).